We begin with the raw amino-acid sequence, 160 residues long: Sec-independent protein translocase protein TatB (160 aa).

The chain crosses the membrane as a helical span at residues 1-21 (MIDLGVSKIALIGAVALIVIG). 2 disordered regions span residues 70-100 (ARDVETSIQTSASDFEKSWSDATGSDASTAT) and 133-160 (RSGVRTKAQSGAARVARFRPQSGRSSSF). A compositionally biased stretch (polar residues) spans 89–100 (SDATGSDASTAT).

This sequence belongs to the TatB family. In terms of assembly, the Tat system comprises two distinct complexes: a TatABC complex, containing multiple copies of TatA, TatB and TatC subunits, and a separate TatA complex, containing only TatA subunits. Substrates initially bind to the TatABC complex, which probably triggers association of the separate TatA complex to form the active translocon.

Its subcellular location is the cell inner membrane. Its function is as follows. Part of the twin-arginine translocation (Tat) system that transports large folded proteins containing a characteristic twin-arginine motif in their signal peptide across membranes. Together with TatC, TatB is part of a receptor directly interacting with Tat signal peptides. TatB may form an oligomeric binding site that transiently accommodates folded Tat precursor proteins before their translocation. The protein is Sec-independent protein translocase protein TatB of Polaromonas sp. (strain JS666 / ATCC BAA-500).